A 207-amino-acid chain; its full sequence is Ribonuclease HII (207 aa).

One can recognise an RNase H type-2 domain in the interval 12-205 (GLVVGIDEVG…IRNMIEAEAH (194 aa)). Asp-18, Glu-19, and Asp-114 together coordinate a divalent metal cation.

This sequence belongs to the RNase HII family. Mn(2+) serves as cofactor. Mg(2+) is required as a cofactor.

It is found in the cytoplasm. It catalyses the reaction Endonucleolytic cleavage to 5'-phosphomonoester.. Functionally, endonuclease that specifically degrades the RNA of RNA-DNA hybrids. This Gluconobacter oxydans (strain 621H) (Gluconobacter suboxydans) protein is Ribonuclease HII.